Reading from the N-terminus, the 133-residue chain is ATP synthase epsilon chain, chloroplastic (133 aa).

It belongs to the ATPase epsilon chain family. In terms of assembly, F-type ATPases have 2 components, CF(1) - the catalytic core - and CF(0) - the membrane proton channel. CF(1) has five subunits: alpha(3), beta(3), gamma(1), delta(1), epsilon(1). CF(0) has three main subunits: a, b and c.

It is found in the plastid. The protein localises to the chloroplast thylakoid membrane. Its function is as follows. Produces ATP from ADP in the presence of a proton gradient across the membrane. The protein is ATP synthase epsilon chain, chloroplastic of Thalassiosira pseudonana (Marine diatom).